We begin with the raw amino-acid sequence, 426 residues long: Serine/threonine-protein kinase SRPK (426 aa).

Residues 1–23 (MENIFKEKEKGKEKAKEEEKEND) show a composition bias toward basic and acidic residues. The interval 1–40 (MENIFKEKEKGKEKAKEEEKENDSGDLFDSEDEGTEDYKK) is disordered. Over residues 24–35 (SGDLFDSEDEGT) the composition is skewed to acidic residues. The Protein kinase domain occupies 56–419 (YRIVKKLGWG…ARDSLEHPYM (364 aa)). ATP contacts are provided by residues 62 to 70 (LGWGHFSTV) and Lys86. The active-site Proton acceptor is the Asp188. The Nuclear localization signal signature appears at 318–328 (PKKGDKYDKTD).

This sequence belongs to the protein kinase superfamily. CMGC Ser/Thr protein kinase family.

It localises to the nucleus. The enzyme catalyses L-seryl-[protein] + ATP = O-phospho-L-seryl-[protein] + ADP + H(+). The catalysed reaction is L-threonyl-[protein] + ATP = O-phospho-L-threonyl-[protein] + ADP + H(+). In terms of biological role, phosphorylates serine/arginine-rich protein PSR. In Physarum polycephalum (Slime mold), this protein is Serine/threonine-protein kinase SRPK.